Here is a 126-residue protein sequence, read N- to C-terminus: UPF0102 protein PMT_0624 (126 aa).

The protein belongs to the UPF0102 family.

The polypeptide is UPF0102 protein PMT_0624 (Prochlorococcus marinus (strain MIT 9313)).